The following is a 66-amino-acid chain: Large ribosomal subunit protein bL35 (66 aa).

The protein belongs to the bacterial ribosomal protein bL35 family.

The sequence is that of Large ribosomal subunit protein bL35 from Ruegeria pomeroyi (strain ATCC 700808 / DSM 15171 / DSS-3) (Silicibacter pomeroyi).